The chain runs to 131 residues: Phosphomevalonate dehydratase small subunit (131 aa).

The active-site Proton acceptor is S62.

This sequence belongs to the AcnX type II small subunit family. In terms of assembly, heterodimer composed of a large subunit (PMDh-L) and a small subunit (PMDh-S).

The catalysed reaction is (R)-5-phosphomevalonate = (2E)-3-methyl-5-phosphooxypent-2-enoate + H2O. It participates in isoprenoid biosynthesis; isopentenyl diphosphate biosynthesis via mevalonate pathway. Its function is as follows. Component of a hydro-lyase that catalyzes the dehydration of mevalonate 5-phosphate (MVA5P) to form trans-anhydromevalonate 5-phosphate (tAHMP). Involved in the archaeal mevalonate (MVA) pathway, which provides fundamental precursors for isoprenoid biosynthesis, such as isopentenyl diphosphate (IPP) and dimethylallyl diphosphate (DMAPP). In Methanothermobacter thermautotrophicus (strain ATCC 29096 / DSM 1053 / JCM 10044 / NBRC 100330 / Delta H) (Methanobacterium thermoautotrophicum), this protein is Phosphomevalonate dehydratase small subunit.